The primary structure comprises 379 residues: Glutamate 5-kinase (379 aa).

Residue lysine 19 participates in ATP binding. 3 residues coordinate substrate: serine 59, aspartate 146, and asparagine 158. ATP contacts are provided by residues 178 to 179 (TD) and 220 to 226 (TGGMATK). The PUA domain maps to 285-363 (SGDIVIDQGA…KDIISILGYD (79 aa)).

Belongs to the glutamate 5-kinase family.

The protein resides in the cytoplasm. The catalysed reaction is L-glutamate + ATP = L-glutamyl 5-phosphate + ADP. It participates in amino-acid biosynthesis; L-proline biosynthesis; L-glutamate 5-semialdehyde from L-glutamate: step 1/2. Its function is as follows. Catalyzes the transfer of a phosphate group to glutamate to form L-glutamate 5-phosphate. The protein is Glutamate 5-kinase of Vibrio vulnificus (strain YJ016).